The chain runs to 3329 residues: Breast cancer type 2 susceptibility protein homolog (3329 aa).

Residues 1–40 form an interaction with PALB2 region; it reads MPVEYKRRPTFWEIFKARCSTADLGPISLNWFEELSSEAP. 2 disordered regions span residues 37 to 69 and 207 to 241; these read SEAP…QRNP and EARS…SVPS. Phosphoserine occurs at positions 435 and 481. Residues 628-650 form a disordered region; the sequence is PDSSDKKRCLPNDPEEPSLTNSF. The interaction with NPM1 stretch occupies residues 628 to 979; the sequence is PDSSDKKRCL…DKWSEFLDPV (352 aa). A Phosphoserine modification is found at Ser-735. Over residues 934 to 953 the composition is skewed to basic and acidic residues; the sequence is EKSRNNIEQHQKGTEDKDFK. The segment at 934-965 is disordered; the sequence is EKSRNNIEQHQKGTEDKDFKSNSSLNMKSDGN. Residues 954–965 show a composition bias toward polar residues; the sequence is SNSSLNMKSDGN. 2 BRCA2 repeats span residues 981 to 1015 and 1192 to 1226; these read NHNF…DIEE and NEME…DIEN. An interaction with RAD51 region spans residues 982–2035; it reads HNFGGSFRTA…LHKVKGMLEE (1054 aa). The segment at 1296–1340 is disordered; it reads NTKHEDSYTSSQRNNLENSDGSMSSTSGPVYIHKGDSDLPADQGS. Over residues 1303 to 1323 the composition is skewed to polar residues; that stretch reads YTSSQRNNLENSDGSMSSTSG. BRCA2 repeat units lie at residues 1394–1428, 1491–1525, 1623–1657, 1924–1958, and 2004–2038; these read IKEF…RETD, KEPT…ETQY, TEDS…EQGD, PSRT…EMDG, and NSSV…EFDL. Residue Ser-2048 is modified to Phosphoserine. Residues 2073–2099 are disordered; the sequence is NSKLQKTYNDKSSLPSNYKESGSSGNT. A compositionally biased stretch (polar residues) spans 2074-2099; the sequence is SKLQKTYNDKSSLPSNYKESGSSGNT. An interaction with HSF2BP region spans residues 2219 to 2285; the sequence is KRGGVTVDAV…EPVTCGPFCS (67 aa). The segment at 2298-2466 is interaction with FANCD2; it reads TSPAQELLSK…SPKQLYIYGV (169 aa). The interval 2361–2393 is disordered; that stretch reads FHGDEHFNSKNVNLEGKNQKSTDGDREDGNDSH. Positions 2377 to 2393 are enriched in basic and acidic residues; that stretch reads KNQKSTDGDREDGNDSH. The interval 2402-2753 is interaction with SEM1; that stretch reads MSSLQSARDL…QRVYPLQWVE (352 aa). The short motif at 2603 to 2619 is the Nuclear export signal; masked by interaction with SEM1 element; that stretch reads AAKTLVLCISDIISPST. Phosphoserine; by CDK1 and CDK2 is present on Ser-3214. 2 disordered regions span residues 3221-3257 and 3273-3329; these read FQPP…VSLP and QALT…AVES. Phosphoserine is present on Ser-3241. Residues 3309 to 3329 are compositionally biased toward basic and acidic residues; that stretch reads SRKESLRDCRGDSSEKLAVES.

In terms of assembly, monomer and dimer. Interacts with RAD51; regulates RAD51 recruitment and function at sites of DNA repair. Interacts with SEM1, WDR16, USP11, DMC1, ROCK2 and NPM1. Interacts with both nonubiquitinated and monoubiquitinated FANCD2; this complex also includes XRCC3 and phosphorylated FANCG. Part of a BRCA complex containing BRCA1, BRCA2 and PALB2. Component of the homologous recombination repair (HR) complex composed of ERCC5/XPG, BRCA2, PALB2, DSS1 and RAD51. Within the complex, interacts with ERCC5/XPG and PALB2. Interacts directly with PALB2 which may serve as a scaffold for a HR complex containing PALB2, BRCA2, RAD51C, RAD51 and XRCC3. Interacts with BRCA1 only in the presence of PALB2 which serves as the bridging protein. Interacts with POLH; the interaction is direct. Interacts with the TREX-2 complex subunits PCID2 and SEM1. Interacts with HSF2BP and BRME1; the interaction with HSF2BP is direct and allows the formation of a ternary complex. The complex BRME1:HSF2BP:BRCA2 interacts with SPATA22, MEIOB and RAD51. Phosphorylated by ATM upon irradiation-induced DNA damage. Phosphorylation by CHEK1 and CHEK2 regulates interaction with RAD51. Phosphorylation at Ser-3291 by CDK1 and CDK2 is low in S phase when recombination is active, but increases as cells progress towards mitosis; this phosphorylation prevents homologous recombination-dependent repair during S phase and G2 by inhibiting RAD51 binding. In terms of processing, ubiquitinated in the absence of DNA damage; this does not lead to proteasomal degradation. In contrast, ubiquitination in response to DNA damage leads to proteasomal degradation. In terms of tissue distribution, widely expressed. Highest expression in cerebellum, testis, ileum, appendix, epididymis, ovary and mammary gland. No expression in lung.

It is found in the nucleus. The protein localises to the cytoplasm. The protein resides in the cytoskeleton. It localises to the microtubule organizing center. Its subcellular location is the centrosome. In terms of biological role, involved in double-strand break repair and/or homologous recombination. Binds RAD51 and potentiates recombinational DNA repair by promoting assembly of RAD51 onto single-stranded DNA (ssDNA). Acts by targeting RAD51 to ssDNA over double-stranded DNA, enabling RAD51 to displace replication protein-A (RPA) from ssDNA and stabilizing RAD51-ssDNA filaments by blocking ATP hydrolysis. Part of a PALB2-scaffolded HR complex containing RAD51C and which is thought to play a role in DNA repair by HR. May participate in S phase checkpoint activation. Binds selectively to ssDNA, and to ssDNA in tailed duplexes and replication fork structures. May play a role in the extension step after strand invasion at replication-dependent DNA double-strand breaks; together with PALB2 is involved in both POLH localization at collapsed replication forks and DNA polymerization activity. In concert with NPM1, regulates centrosome duplication. Interacts with the TREX-2 complex (transcription and export complex 2) subunits PCID2 and SEM1, and is required to prevent R-loop-associated DNA damage and thus transcription-associated genomic instability, independently of its known role in homologous recombination. In Mus musculus (Mouse), this protein is Breast cancer type 2 susceptibility protein homolog.